The following is a 245-amino-acid chain: 1-(5-phosphoribosyl)-5-[(5-phosphoribosylamino)methylideneamino] imidazole-4-carboxamide isomerase (245 aa).

The Proton acceptor role is filled by aspartate 7. Aspartate 129 serves as the catalytic Proton donor.

It belongs to the HisA/HisF family.

It is found in the cytoplasm. The enzyme catalyses 1-(5-phospho-beta-D-ribosyl)-5-[(5-phospho-beta-D-ribosylamino)methylideneamino]imidazole-4-carboxamide = 5-[(5-phospho-1-deoxy-D-ribulos-1-ylimino)methylamino]-1-(5-phospho-beta-D-ribosyl)imidazole-4-carboxamide. It functions in the pathway amino-acid biosynthesis; L-histidine biosynthesis; L-histidine from 5-phospho-alpha-D-ribose 1-diphosphate: step 4/9. This chain is 1-(5-phosphoribosyl)-5-[(5-phosphoribosylamino)methylideneamino] imidazole-4-carboxamide isomerase, found in Vibrio campbellii (strain ATCC BAA-1116).